The sequence spans 499 residues: Proline dehydrogenase 1, mitochondrial (499 aa).

A mitochondrion-targeting transit peptide spans 1–72 (MATRLLRTNF…LDLSDQARLF (72 aa)).

It belongs to the proline oxidase family. FAD serves as cofactor. Ubiquitous. Highest expression in pollen grains, in the stigma and in developing embryos.

It is found in the mitochondrion. The enzyme catalyses L-proline + a quinone = (S)-1-pyrroline-5-carboxylate + a quinol + H(+). It participates in amino-acid degradation; L-proline degradation into L-glutamate; L-glutamate from L-proline: step 1/2. In terms of biological role, converts proline to delta-1-pyrroline-5-carboxylate. The polypeptide is Proline dehydrogenase 1, mitochondrial (POX1) (Arabidopsis thaliana (Mouse-ear cress)).